We begin with the raw amino-acid sequence, 270 residues long: Cyclic AMP-dependent transcription factor ATF-1 (270 aa).

The tract at residues 1–91 (MEDSHKSNTS…DGENPGVSAV (91 aa)) is disordered. Over residues 9 to 21 (TSETAPQSGSTVQ) the composition is skewed to polar residues. Positions 31–90 (QVSSLSESEESQDSSDSIGSSQKTHGILARRPSYRKILKDLSSEDIRGRKGDGENPGVSA) constitute a KID domain. Ser63 bears the Phosphoserine; by CaMK1, CDK3, RPS6KA4 and RPS6KA5 mark. Residues 67 to 83 (ILKDLSSEDIRGRKGDG) show a composition bias toward basic and acidic residues. Residue Ser197 is modified to Phosphoserine; by HIPK2. Glycyl lysine isopeptide (Lys-Gly) (interchain with G-Cter in SUMO2) cross-links involve residues Lys207 and Lys214. In terms of domain architecture, bZIP spans 212–270 (QLKREIRLMKNREAARECRRKKKEYVKCLENRVAVLENQNKTLIEELKTLKDLYSNKSV). Residues 214 to 238 (KREIRLMKNREAARECRRKKKEYVK) form a basic motif region. Residues 240-261 (LENRVAVLENQNKTLIEELKTL) are leucine-zipper.

Belongs to the bZIP family. ATF subfamily. In terms of assembly, binds DNA as a dimer. Interacts with HIPK2 and CDK3. Interacts with MOTS-c, a peptide produced by the mitochondrially encoded 12S rRNA MT-RNR1; the interaction occurs in the nucleus following metabolic stress. Phosphorylated at Ser-197 by HIPK2 in response to genotoxic stress. This phosphorylation promotes transcription repression of FTH1 and other antioxidant detoxification genes. The CDK3-mediated phosphorylation at Ser-63 promotes its transactivation and transcriptional activities. Phosphorylated at Ser-63 by RPS6KA4 and RPS6KA5 in response to mitogenic or stress stimuli.

It localises to the nucleus. In terms of biological role, this protein binds the cAMP response element (CRE) (consensus: 5'-GTGACGT[AC][AG]-3'), a sequence present in many viral and cellular promoters. Mediates PKA-induced stimulation of CRE-reporter genes. Represses the expression of FTH1 and other antioxidant detoxification genes. Triggers cell proliferation and transformation. This chain is Cyclic AMP-dependent transcription factor ATF-1 (ATF1), found in Bos taurus (Bovine).